A 320-amino-acid chain; its full sequence is Cytosolic Fe-S cluster assembly factor NUBP1 (320 aa).

Residue M1 is modified to N-acetylmethionine. [4Fe-4S] cluster is bound by residues C8, C22, C25, and C31. Residue 62 to 69 (GKGGVGKS) coordinates ATP. Residues C235 and C238 each coordinate [4Fe-4S] cluster. At S319 the chain carries Phosphoserine.

This sequence belongs to the Mrp/NBP35 ATP-binding proteins family. NUBP1/NBP35 subfamily. Heterotetramer of 2 NUBP1 and 2 NUBP2 chains. Interacts with KIFC1. Interacts with NUBP2. Interacts with the BBS/CCT complex subunit CCT1. The cofactor is [4Fe-4S] cluster.

The protein resides in the cytoplasm. The protein localises to the nucleus. It localises to the cell projection. It is found in the cytoskeleton. Its subcellular location is the cilium axoneme. The protein resides in the cilium basal body. The protein localises to the microtubule organizing center. It localises to the centrosome. It is found in the centriole. Its function is as follows. Component of the cytosolic iron-sulfur (Fe/S) protein assembly (CIA) machinery. Required for maturation of extramitochondrial Fe-S proteins. The NUBP1-NUBP2 heterotetramer forms a Fe-S scaffold complex, mediating the de novo assembly of an Fe-S cluster and its transfer to target apoproteins. Implicated in the regulation of centrosome duplication. Negatively regulates cilium formation and structure. The chain is Cytosolic Fe-S cluster assembly factor NUBP1 from Homo sapiens (Human).